Here is a 311-residue protein sequence, read N- to C-terminus: Ribosomal RNA small subunit methyltransferase H (311 aa).

Residues 32–34 (AGH), D52, F79, D100, and Q107 contribute to the S-adenosyl-L-methionine site.

Belongs to the methyltransferase superfamily. RsmH family.

It localises to the cytoplasm. The catalysed reaction is cytidine(1402) in 16S rRNA + S-adenosyl-L-methionine = N(4)-methylcytidine(1402) in 16S rRNA + S-adenosyl-L-homocysteine + H(+). Functionally, specifically methylates the N4 position of cytidine in position 1402 (C1402) of 16S rRNA. This chain is Ribosomal RNA small subunit methyltransferase H, found in Staphylococcus haemolyticus (strain JCSC1435).